The sequence spans 765 residues: 5-methyltetrahydropteroyltriglutamate--homocysteine methyltransferase 1 (765 aa).

The 5-methyltetrahydropteroyltri-L-glutamate site is built by K18 and N116. 437–439 contacts L-homocysteine; it reads IGS. L-methionine-binding positions include 437 to 439 and E490; that span reads IGS. 5-methyltetrahydropteroyltri-L-glutamate-binding positions include 521-522 and W567; that span reads RC. An L-homocysteine-binding site is contributed by D605. Position 605 (D605) interacts with L-methionine. Residues H647, C649, H658, D662, and E671 each contribute to the Zn(2+) site. The Proton donor role is filled by H701. C733 provides a ligand contact to Zn(2+).

It belongs to the vitamin-B12 independent methionine synthase family. It depends on Zn(2+) as a cofactor. As to expression, expressed in leaves, stems, flowers, siliques and seeds.

Its subcellular location is the cytoplasm. It localises to the cytosol. It carries out the reaction 5-methyltetrahydropteroyltri-L-glutamate + L-homocysteine = tetrahydropteroyltri-L-glutamate + L-methionine. It functions in the pathway amino-acid biosynthesis; L-methionine biosynthesis via de novo pathway; L-methionine from L-homocysteine (MetE route): step 1/1. Functionally, catalyzes the transfer of a methyl group from 5-methyltetrahydrofolate to homocysteine resulting in methionine formation. This is 5-methyltetrahydropteroyltriglutamate--homocysteine methyltransferase 1 (MS1) from Arabidopsis thaliana (Mouse-ear cress).